A 707-amino-acid polypeptide reads, in one-letter code: Keratin, type II cytoskeletal 2 epidermal (707 aa).

Residues 1-20 are disordered; the sequence is MSCQISCRSRRGGGGGGGGG. Residues 1 to 198 are head; it reads MSCQISCRSR…DPEIQNVKSQ (198 aa). R22 is subject to Asymmetric dimethylarginine. Phosphoserine is present on residues S25 and S28. The span at 29–38 shows a compositional bias: low complexity; sequence AVVSGGSRRS. Positions 29 to 59 are disordered; it reads AVVSGGSRRSNTSFSCISRHGGGRGGSGGGG. At R52 the chain carries Omega-N-methylarginine. S64 bears the Phosphoserine mark. Residues 199 to 234 are coil 1A; that stretch reads EREQIKTLNNKFASFIDKVRFLEQQNQVLRTKWELL. In terms of domain architecture, IF rod spans 199-512; sequence EREQIKTLNN…KLLEGEECRM (314 aa). The tract at residues 235-253 is linker 1; it reads QQLDVGSRTTNLDPIFQAY. Residues 254–345 form a coil 1B region; the sequence is IGMLKKQVDR…TLYDAELSQL (92 aa). Positions 346 to 369 are linker 12; the sequence is QQDVTDTNVILSMDNNRNLDLDSI. Residues 370 to 508 are coil 2; it reads IAEVQNQYEM…ATYRKLLEGE (139 aa). A tail region spans residues 509–707; sequence ECRMSGDFSD…CGSGVTFSFR (199 aa). Positions 531 to 707 are disordered; it reads SSVASKTGFG…CGSGVTFSFR (177 aa). Gly residues predominate over residues 539–700; that stretch reads FGSGGQSSGG…GSGSGEGCGS (162 aa). R555, R593, R607, and R675 each carry omega-N-methylarginine.

The protein belongs to the intermediate filament family. As to quaternary structure, heterotetramer of two type I and two type II keratins. Associates with KRT10. As to expression, expressed predominantly in the suprabasal layers of the plantar epidermis outside of the footpads (at protein level). Expressed in the suprabasal layers of the interfollicular epidermis of the ear, in the interscale regions distant from the hair follicles in the tail, and in the soles of the footpads (at protein level). Expressed mainly in the middle spinous and granular cells of the epidermis of adult tail, nipple and footsole skin. Also found in ear.

The protein localises to the cytoplasm. Its function is as follows. Probably contributes to terminal cornification. Associated with keratinocyte activation, proliferation and keratinization. Required for maintenance of corneocytes and keratin filaments in suprabasal keratinocytes in the epidermis of the ear, potentially via moderation of expression and localization of keratins and their partner proteins. Plays a role in the establishment of the epidermal barrier on plantar skin. The sequence is that of Keratin, type II cytoskeletal 2 epidermal from Mus musculus (Mouse).